The primary structure comprises 493 residues: Ribonuclease Y (493 aa).

The chain crosses the membrane as a helical span at residues 19 to 39; sequence IFAILFLIIVILNLGLLVFLA. The 70-residue stretch at 172–241 folds into the KH domain; it reads SASFTVIESD…LTIRNILIND (70 aa). One can recognise an HD domain in the interval 300–392; that stretch reads VLSHCLETGF…TQIGDKLSAG (93 aa).

This sequence belongs to the RNase Y family.

The protein localises to the cell membrane. Endoribonuclease that initiates mRNA decay. The polypeptide is Ribonuclease Y (Mycoplasma pneumoniae (strain ATCC 29342 / M129 / Subtype 1) (Mycoplasmoides pneumoniae)).